The following is a 247-amino-acid chain: Histone acetyltransferase MCC1 (247 aa).

The region spanning 25-198 is the N-acetyltransferase domain; sequence IHYRPINPND…DAFLFVYFIN (174 aa).

This sequence belongs to the acetyltransferase family.

It catalyses the reaction L-lysyl-[protein] + acetyl-CoA = N(6)-acetyl-L-lysyl-[protein] + CoA + H(+). In terms of biological role, histone acetyltransferase that probably regulates acetylation status of histone H3 during meiosis. Histone acetylation may influence recombination and chromosome segregation. In Arabidopsis thaliana (Mouse-ear cress), this protein is Histone acetyltransferase MCC1 (MCC1).